A 346-amino-acid polypeptide reads, in one-letter code: Glycosyltransferase 1 domain-containing protein 1 (346 aa).

The signal sequence occupies residues 1 to 16; it reads MRLLFLAVLRPHTGNA.

This sequence belongs to the glycosyltransferase group 1 family. Glycosyltransferase 4 subfamily.

It is found in the secreted. The polypeptide is Glycosyltransferase 1 domain-containing protein 1 (GLT1D1) (Homo sapiens (Human)).